The sequence spans 92 residues: MAKRTKKVGIVGKYGTRYGASLRKMVKKIEISQHAKYTCSFCGKTKMKRRAVGIWHCGSCMKTVAGGAWTYNTTSAVTVKSAIRRLKELKDQ.

Zn(2+)-binding residues include C39, C42, C57, and C60. Residues 39–60 (CSFCGKTKMKRRAVGIWHCGSC) form a C4-type zinc finger.

This sequence belongs to the eukaryotic ribosomal protein eL43 family. Component of the large ribosomal subunit.

The protein resides in the cytoplasm. Its function is as follows. Component of the large ribosomal subunit. The ribosome is a large ribonucleoprotein complex responsible for the synthesis of proteins in the cell. The chain is Large ribosomal subunit protein eL43 (Rpl37a) from Mus musculus (Mouse).